The following is a 399-amino-acid chain: MTLAVAVAPLEKTPLETYVPPAKPSLIGLSRAELAERLGAIGVAPAQRKMRAQQLWHWMYVRGARDFAEMTNVSKEMRATLAEHCTVDRPEVVAEQISADGTRKWLLRLPSGDDVQKAHEVECVYIPETDRGTLCVSSQVGCTLNCSFCHTGTQRLVRNLTAGEIVGQVMVARDRLGDWIDRETPNGNRLVTNVVMMGMGEPLYNFEAVRDALLIVTDNEGIGISRRRVTLSTSGVVPNIARTGDEIGVMLAISLHAVRDELRDELVPLNRKYPLKELLQACRDYPGASNARRITFEYVMLKGVNDSLDDARRLVQLLKGIPAKINLIPFNPWPGSKYECSDWDQIEKFSEYVFNAGYSSPVRTPRGRDILAACGQLKSETEKLSVRERDALRAMAMTD.

Catalysis depends on Glu-122, which acts as the Proton acceptor. One can recognise a Radical SAM core domain in the interval 128–371 (ETDRGTLCVS…VRTPRGRDIL (244 aa)). Residues Cys-135 and Cys-374 are joined by a disulfide bond. 3 residues coordinate [4Fe-4S] cluster: Cys-142, Cys-146, and Cys-149. S-adenosyl-L-methionine is bound by residues 200-201 (GE), Ser-232, 254-256 (SLH), and Asn-331. Cys-374 (S-methylcysteine intermediate) is an active-site residue.

This sequence belongs to the radical SAM superfamily. RlmN family. The cofactor is [4Fe-4S] cluster.

Its subcellular location is the cytoplasm. It carries out the reaction adenosine(2503) in 23S rRNA + 2 reduced [2Fe-2S]-[ferredoxin] + 2 S-adenosyl-L-methionine = 2-methyladenosine(2503) in 23S rRNA + 5'-deoxyadenosine + L-methionine + 2 oxidized [2Fe-2S]-[ferredoxin] + S-adenosyl-L-homocysteine. The catalysed reaction is adenosine(37) in tRNA + 2 reduced [2Fe-2S]-[ferredoxin] + 2 S-adenosyl-L-methionine = 2-methyladenosine(37) in tRNA + 5'-deoxyadenosine + L-methionine + 2 oxidized [2Fe-2S]-[ferredoxin] + S-adenosyl-L-homocysteine. In terms of biological role, specifically methylates position 2 of adenine 2503 in 23S rRNA and position 2 of adenine 37 in tRNAs. m2A2503 modification seems to play a crucial role in the proofreading step occurring at the peptidyl transferase center and thus would serve to optimize ribosomal fidelity. This Rhodopseudomonas palustris (strain HaA2) protein is Dual-specificity RNA methyltransferase RlmN.